The following is a 476-amino-acid chain: Beta-amyrin 28-monooxygenase (476 aa).

A helical membrane pass occupies residues 2–22 (ELLYVCLVCVFVFLVSLLLLY). C421 provides a ligand contact to heme.

It belongs to the cytochrome P450 family. The cofactor is heme. As to expression, specifically expressed in roots.

It is found in the membrane. The catalysed reaction is beta-amyrin + 3 reduced [NADPH--hemoprotein reductase] + 3 O2 = oleanolate + 3 oxidized [NADPH--hemoprotein reductase] + 4 H2O + 4 H(+). Functionally, catalyzes the carboxylation of beta-amyrin at the C-28 position to form oleanolate. Catalyzes the carboxylation of alpha-amyrin at the C-28 position to form ursolate. The protein is Beta-amyrin 28-monooxygenase (CYP716A44) of Solanum lycopersicum (Tomato).